Here is a 793-residue protein sequence, read N- to C-terminus: DnaJ homolog subfamily C member 10 (793 aa).

The signal sequence occupies residues 1–32 (MGVWLNKDDFIRDLKRISLCLLILYVVVVVGT). Residues 35–100 (NFYSLLGVSK…DLRKKYDKYG (66 aa)) enclose the J domain. Residues 130-232 (EIITLERREF…ESLVAFAMQH (103 aa)) enclose the Thioredoxin 1 domain. Cysteine 158 and cysteine 161 form a disulfide bridge. 2 trxb regions span residues 235 to 350 (STVT…LPDF) and 348 to 463 (PDFE…PQNF). Thioredoxin domains are found at residues 454 to 553 (HVTT…IEDL), 557 to 665 (SVVS…SWGL), and 671 to 776 (ASID…ALIY). Cysteine 480 and cysteine 483 are disulfide-bonded. N-linked (GlcNAc...) asparagine glycosylation occurs at asparagine 530. 2 cysteine pairs are disulfide-bonded: cysteine 588–cysteine 591 and cysteine 700–cysteine 703. A Prevents secretion from ER motif is present at residues 790–793 (KDEL).

Interacts with HSPA5 (via its J domain). Interacts with EDEM1. As to expression, ubiquitous. Particularly abundant in secretory tissues. Ubiquitous in fetal tissues and tumor tissues. Higher expression in fetal tissues than in adult tissues. Expressed in testis, pancreas, fetal thymus and fetal kidney. High expression in heart, liver, kidney, and testis. Low expression in spleen and skeletal muscle.

Its subcellular location is the endoplasmic reticulum lumen. Its function is as follows. Endoplasmic reticulum disulfide reductase involved both in the correct folding of proteins and degradation of misfolded proteins. Required for efficient folding of proteins in the endoplasmic reticulum by catalyzing the removal of non-native disulfide bonds formed during the folding of proteins, such as LDLR. Also involved in endoplasmic reticulum-associated degradation (ERAD) by reducing incorrect disulfide bonds in misfolded glycoproteins recognized by EDEM1. Interaction with HSPA5 is required its activity, not for the disulfide reductase activity, but to facilitate the release of DNAJC10 from its substrate. Promotes apoptotic signaling pathway in response to endoplasmic reticulum stress. The protein is DnaJ homolog subfamily C member 10 (Dnajc10) of Mus musculus (Mouse).